Here is a 253-residue protein sequence, read N- to C-terminus: Ribosome-inactivating protein saporin-7 (253 aa).

The active site involves glutamate 176.

Belongs to the ribosome-inactivating protein family. Type 1 RIP subfamily.

It carries out the reaction Endohydrolysis of the N-glycosidic bond at one specific adenosine on the 28S rRNA.. Its function is as follows. Ribosome-inactivating protein of type 1, inhibits protein synthesis in animal cells. The chain is Ribosome-inactivating protein saporin-7 (SAP7) from Saponaria officinalis (Common soapwort).